The primary structure comprises 421 residues: F-box/kelch-repeat protein At1g26930 (421 aa).

The tract at residues 54-73 (TDSSEGEDNGSSSDSGTLIP) is disordered. Residues 70 to 117 (TLIPGMNRDDSLSCLIRCSRADYCSIASVNRSLRSLIRSGEIYRLRRL) enclose the F-box domain. Kelch repeat units follow at residues 114 to 167 (LRRL…LAVG), 169 to 212 (DLLV…SYGE), 213 to 260 (IAVL…FMDG), 261 to 312 (KFYV…MSAA), and 320 to 366 (AVVN…GLAF).

This Arabidopsis thaliana (Mouse-ear cress) protein is F-box/kelch-repeat protein At1g26930.